The primary structure comprises 589 residues: UvrABC system protein C (589 aa).

The GIY-YIG domain maps to 10 to 87 (ESSGVYLMKK…IKKYSPKYNI (78 aa)). The region spanning 197–232 (SKLINELTALMNKASQDMDFEKSIIYREQIKELKSI) is the UVR domain.

Belongs to the UvrC family. Interacts with UvrB in an incision complex.

It localises to the cytoplasm. Functionally, the UvrABC repair system catalyzes the recognition and processing of DNA lesions. UvrC both incises the 5' and 3' sides of the lesion. The N-terminal half is responsible for the 3' incision and the C-terminal half is responsible for the 5' incision. The chain is UvrABC system protein C from Fusobacterium nucleatum subsp. nucleatum (strain ATCC 25586 / DSM 15643 / BCRC 10681 / CIP 101130 / JCM 8532 / KCTC 2640 / LMG 13131 / VPI 4355).